The sequence spans 84 residues: Large ribosomal subunit protein bL27 (84 aa).

The tract at residues 1-20 is disordered; that stretch reads MAHKKAGGSTRNGRDSNPKY.

This sequence belongs to the bacterial ribosomal protein bL27 family.

This Francisella tularensis subsp. tularensis (strain FSC 198) protein is Large ribosomal subunit protein bL27.